A 459-amino-acid chain; its full sequence is tRNA modification GTPase MnmE (459 aa).

R29, E91, and R130 together coordinate (6S)-5-formyl-5,6,7,8-tetrahydrofolate. Residues G225–T381 enclose the TrmE-type G domain. Residue N235 coordinates K(+). GTP contacts are provided by residues N235–S240, T254–T260, and D279–G282. S239 contacts Mg(2+). K(+)-binding residues include T254, L256, and T259. T260 provides a ligand contact to Mg(2+). A (6S)-5-formyl-5,6,7,8-tetrahydrofolate-binding site is contributed by K459.

The protein belongs to the TRAFAC class TrmE-Era-EngA-EngB-Septin-like GTPase superfamily. TrmE GTPase family. In terms of assembly, homodimer. Heterotetramer of two MnmE and two MnmG subunits. K(+) serves as cofactor.

Its subcellular location is the cytoplasm. Its function is as follows. Exhibits a very high intrinsic GTPase hydrolysis rate. Involved in the addition of a carboxymethylaminomethyl (cmnm) group at the wobble position (U34) of certain tRNAs, forming tRNA-cmnm(5)s(2)U34. This is tRNA modification GTPase MnmE from Synechococcus sp. (strain JA-2-3B'a(2-13)) (Cyanobacteria bacterium Yellowstone B-Prime).